The sequence spans 243 residues: MFSASSLLAVIALAISSVSAAGPSAVPLGTAGNYVILASTGVSTVPQSVITGAVGVSPGTAASLTGFSLILSGTGTFSTSSQVTGQLTGADYGTPTPSILTTAIGDMGTAYINAATRSGPDFLEIYTGALGGTTLLPGLYKWTSSVGASADFTISGTSTDTWIFQIDGTLDVATGKQITLVGGAQAKNIIWVVAGAVNIEVGAKFEGTILAKTAVTFKTGSSLNGRILAQTSVALQSATIVEK.

The signal sequence occupies residues 1–20 (MFSASSLLAVIALAISSVSA).

This sequence belongs to the ice-binding protein family.

Functionally, binds to the surface of ice crystals. Has low thermal hysteresis (TH) activity, which is the ability to lower the freezing point of an aqueous solution below its melting point. The TH activity of this protein is approximately 0.3 degrees Celsius at 11 mM. The polypeptide is Ice-binding protein K3-B1 (Typhula ishikariensis (Gray snow mold fungus)).